We begin with the raw amino-acid sequence, 224 residues long: MHTTQKDTTYTKIFVGGLPYHTTDSSLRKYFEVFGDIEEAVVITDRQTGKSRGYGFVTMADRAAAERACKDPNPIIDGRKANVNLAYLGAKPRIMQPGFAFGVQQIHPALVQRPYGIPAHYVYPQAYVQQGLVIPHVQQTAAASTSPYIDYTSAAYAQYAAAAAAAYDQYPYAASPATTGYVTAAGYGYAVPQPLTAATPGTAAAAAAAFAQYQPQQLQADRMQ.

The 78-residue stretch at 11–88 (TKIFVGGLPY…RKANVNLAYL (78 aa)) folds into the RRM domain.

It is found in the nucleus. It localises to the cytoplasm. In terms of biological role, multifunctional RNA-binding protein involved in the regulation of pre-mRNA splicing, mRNA stability and mRNA translation important for cell fate decision and differentiation. Plays a major role in pre-mRNA alternative splicing regulation. Mediates preferentially muscle-specific exon inclusion in numerous mRNAs important for striated cardiac and skeletal muscle cell differentiation. Binds to intronic splicing enhancer (ISE) composed of stretches of GU-rich motifs localized in flanking intron of exon that will be included by alternative splicing. Involved in embryonic stem cell (ESC) transition to cardiac cell differentiation by promoting pre-mRNA alternative splicing events of several pluripotency and/or differentiation genes. Plays a role in the regulation of mRNA stability and mRNA translation to which it is bound. Involved in myogenic differentiation by regulating myog levels. Binds to a huge amount of mRNAs. Required for embryonic heart development, sarcomer and M-band formation in striated muscles. The chain is RNA-binding protein 24-B (rbm24-b) from Xenopus laevis (African clawed frog).